We begin with the raw amino-acid sequence, 277 residues long: Adenylate kinase (277 aa).

72–77 is a binding site for ATP; it reads GAGKGT. An NMP region spans residues 92–121; the sequence is ATGDMLRSQVAKQTALGVQAKKIMDQGGLV. Residues Thr-93, Arg-98, 119 to 121, 148 to 151, and Gln-155 each bind AMP; these read GLV and GFPR. Positions 189-226 are LID; the sequence is GRLVHPASGRSYHKLFNPPKVAMTDDVTGDPLVQRSDD. ATP-binding positions include Arg-190 and 199-200; that span reads SY. AMP-binding residues include Arg-223 and Arg-234. Residue Gln-262 coordinates ATP.

This sequence belongs to the adenylate kinase family. AK2 subfamily. Monomer.

The protein localises to the cytoplasm. The protein resides in the cytosol. It is found in the mitochondrion intermembrane space. It carries out the reaction AMP + ATP = 2 ADP. Catalyzes the reversible transfer of the terminal phosphate group between ATP and AMP. Plays an important role in cellular energy homeostasis and in adenine nucleotide metabolism. Adenylate kinase activity is critical for regulation of the phosphate utilization and the AMP de novo biosynthesis pathways. This Eremothecium gossypii (strain ATCC 10895 / CBS 109.51 / FGSC 9923 / NRRL Y-1056) (Yeast) protein is Adenylate kinase.